The sequence spans 391 residues: Putative gustatory receptor 36a (391 aa).

The Cytoplasmic portion of the chain corresponds to 1-3; it reads MFD. The helical transmembrane segment at 4-24 threads the bilayer; sequence WVGLLLKVLYYYGQIIGLINF. At 25–38 the chain is on the extracellular side; that stretch reads EIDWQRGRVVAAQR. Residues 39 to 59 traverse the membrane as a helical segment; the sequence is GILFAIAINVLICMVLLLQIS. Residues 60–73 are Cytoplasmic-facing; sequence KKFNLDVYFGRANQ. The helical transmembrane segment at 74–94 threads the bilayer; it reads LHQYVIIVMVSLRMASGISAI. Over 95-126 the chain is Extracellular; the sequence is LNRWRQRAQLMRLVECVLRLFLKKPHVKQMSR. A helical transmembrane segment spans residues 127 to 147; the sequence is WAILVKFSVGVVSNFLQMAIS. Over 148–165 the chain is Cytoplasmic; the sequence is MESLDRLGFNEFVGMASD. A helical membrane pass occupies residues 166 to 186; sequence FWMSAIINMAISQHYLVILFV. At 187–247 the chain is on the extracellular side; the sequence is RAYYHLLKTE…LQSIVTQLNQ (61 aa). Residues 248–268 traverse the membrane as a helical segment; it reads VFGIQGIMVYGGYYIFSVATT. Residues 269–290 are Cytoplasmic-facing; that stretch reads YITYSLAINGIEELHLSVRAAA. Residues 291–311 traverse the membrane as a helical segment; sequence LVFSWFLFYYTSAILNLFVML. Residues 312 to 391 are Extracellular-facing; the sequence is KLFDDHKEME…FLIQYDMEYF (80 aa).

This sequence belongs to the insect chemoreceptor superfamily. Gustatory receptor (GR) family. Gr22e subfamily.

It localises to the cell membrane. Probable gustatory receptor which mediates acceptance or avoidance behavior, depending on its substrates. In Drosophila melanogaster (Fruit fly), this protein is Putative gustatory receptor 36a (Gr36a).